A 159-amino-acid polypeptide reads, in one-letter code: Transcription elongation factor GreA (159 aa).

Positions 47–73 (AEYDAAREEQSLTEAHIADLENKLSTA) form a coiled coil.

The protein belongs to the GreA/GreB family.

Necessary for efficient RNA polymerase transcription elongation past template-encoded arresting sites. The arresting sites in DNA have the property of trapping a certain fraction of elongating RNA polymerases that pass through, resulting in locked ternary complexes. Cleavage of the nascent transcript by cleavage factors such as GreA or GreB allows the resumption of elongation from the new 3'terminus. GreA releases sequences of 2 to 3 nucleotides. This Chlorobium phaeobacteroides (strain DSM 266 / SMG 266 / 2430) protein is Transcription elongation factor GreA.